The sequence spans 205 residues: LexA repressor (205 aa).

Residues 28-48 (RAELMRAFDFRSPNAAESHLR) constitute a DNA-binding region (H-T-H motif). Catalysis depends on for autocatalytic cleavage activity residues Ser-120 and Lys-159.

Belongs to the peptidase S24 family. As to quaternary structure, homodimer.

The enzyme catalyses Hydrolysis of Ala-|-Gly bond in repressor LexA.. Its function is as follows. Represses a number of genes involved in the response to DNA damage (SOS response), including recA and lexA. In the presence of single-stranded DNA, RecA interacts with LexA causing an autocatalytic cleavage which disrupts the DNA-binding part of LexA, leading to derepression of the SOS regulon and eventually DNA repair. The sequence is that of LexA repressor from Acidithiobacillus ferrooxidans (strain ATCC 23270 / DSM 14882 / CIP 104768 / NCIMB 8455) (Ferrobacillus ferrooxidans (strain ATCC 23270)).